We begin with the raw amino-acid sequence, 401 residues long: Adenylosuccinate synthetase (401 aa).

GTP-binding positions include 11–17 and 39–41; these read GDEGKGK and GHT. The Proton acceptor role is filled by aspartate 12. Residues aspartate 12 and glycine 39 each coordinate Mg(2+). Residues 12-15, 37-40, threonine 127, arginine 141, glutamine 212, threonine 227, and arginine 290 contribute to the IMP site; these read DEGK and NAGH. Histidine 40 (proton donor) is an active-site residue. Residue 286–292 participates in substrate binding; sequence ATTGRPR. Residues arginine 292, 318 to 320, and 390 to 392 each bind GTP; these read KGD and SVG.

This sequence belongs to the adenylosuccinate synthetase family. Homodimer. Mg(2+) serves as cofactor.

Its subcellular location is the cytoplasm. The catalysed reaction is IMP + L-aspartate + GTP = N(6)-(1,2-dicarboxyethyl)-AMP + GDP + phosphate + 2 H(+). It participates in purine metabolism; AMP biosynthesis via de novo pathway; AMP from IMP: step 1/2. Functionally, plays an important role in the de novo pathway of purine nucleotide biosynthesis. Catalyzes the first committed step in the biosynthesis of AMP from IMP. This chain is Adenylosuccinate synthetase, found in Thermosipho africanus (strain TCF52B).